Consider the following 548-residue polypeptide: Protein swallow (548 aa).

Disordered stretches follow at residues 67-109, 184-206, and 358-428; these read AKTC…GRSS, NCQT…SSSF, and FSSV…ELIS. Residues 79 to 91 show a composition bias toward acidic residues; it reads QEDEDDYDEDVDG. Over residues 189 to 205 the composition is skewed to low complexity; sequence SNSDSNYNSNSNNSSSS. Serine 362 and serine 368 each carry phosphoserine. The segment covering 388–402 has biased composition (polar residues); it reads APNNSETSQPSSNDS. The span at 406-420 shows a compositional bias: basic and acidic residues; it reads VEAHEEERPSSRRQW. Phosphoserine occurs at positions 463, 471, 475, 483, 485, and 487.

As to quaternary structure, may be a homo- or heterodimer.

Its subcellular location is the nucleus. Functionally, has a role in localizing bicoid mRNA at the anterior margin of the oocyte during oogenesis, and a poorly characterized role in nuclear divisions in early embryogenesis. The sequence is that of Protein swallow (swa) from Drosophila melanogaster (Fruit fly).